Consider the following 493-residue polypeptide: Anthranilate synthase component 1 (493 aa).

L-tryptophan is bound by residues S48 and 273 to 275 (PYM). Residue 308 to 309 (GT) participates in chorismate binding. E335 contacts Mg(2+). Chorismate contacts are provided by residues Y423, R443, 457–459 (GGG), and G459. E472 contacts Mg(2+).

It belongs to the anthranilate synthase component I family. As to quaternary structure, heterotetramer consisting of two non-identical subunits: a beta subunit (TrpG) and a large alpha subunit (TrpE). The cofactor is Mg(2+).

It carries out the reaction chorismate + L-glutamine = anthranilate + pyruvate + L-glutamate + H(+). It functions in the pathway amino-acid biosynthesis; L-tryptophan biosynthesis; L-tryptophan from chorismate: step 1/5. With respect to regulation, feedback inhibited by tryptophan. Its function is as follows. Part of a heterotetrameric complex that catalyzes the two-step biosynthesis of anthranilate, an intermediate in the biosynthesis of L-tryptophan. In the first step, the glutamine-binding beta subunit (TrpG) of anthranilate synthase (AS) provides the glutamine amidotransferase activity which generates ammonia as a substrate that, along with chorismate, is used in the second step, catalyzed by the large alpha subunit of AS (TrpE) to produce anthranilate. In the absence of TrpG, TrpE can synthesize anthranilate directly from chorismate and high concentrations of ammonia. In Pseudomonas putida (Arthrobacter siderocapsulatus), this protein is Anthranilate synthase component 1 (trpE).